We begin with the raw amino-acid sequence, 233 residues long: Phosphoribosylformylglycinamidine synthase subunit PurQ (233 aa).

The Glutamine amidotransferase type-1 domain occupies 3–233; sequence SAVLVFPGIN…GLVAHLERAA (231 aa). Cys87 serves as the catalytic Nucleophile. Residues His204 and Glu206 contribute to the active site.

As to quaternary structure, part of the FGAM synthase complex composed of 1 PurL, 1 PurQ and 2 PurS subunits.

Its subcellular location is the cytoplasm. The enzyme catalyses N(2)-formyl-N(1)-(5-phospho-beta-D-ribosyl)glycinamide + L-glutamine + ATP + H2O = 2-formamido-N(1)-(5-O-phospho-beta-D-ribosyl)acetamidine + L-glutamate + ADP + phosphate + H(+). The catalysed reaction is L-glutamine + H2O = L-glutamate + NH4(+). It participates in purine metabolism; IMP biosynthesis via de novo pathway; 5-amino-1-(5-phospho-D-ribosyl)imidazole from N(2)-formyl-N(1)-(5-phospho-D-ribosyl)glycinamide: step 1/2. In terms of biological role, part of the phosphoribosylformylglycinamidine synthase complex involved in the purines biosynthetic pathway. Catalyzes the ATP-dependent conversion of formylglycinamide ribonucleotide (FGAR) and glutamine to yield formylglycinamidine ribonucleotide (FGAM) and glutamate. The FGAM synthase complex is composed of three subunits. PurQ produces an ammonia molecule by converting glutamine to glutamate. PurL transfers the ammonia molecule to FGAR to form FGAM in an ATP-dependent manner. PurS interacts with PurQ and PurL and is thought to assist in the transfer of the ammonia molecule from PurQ to PurL. The polypeptide is Phosphoribosylformylglycinamidine synthase subunit PurQ (Nitrobacter winogradskyi (strain ATCC 25391 / DSM 10237 / CIP 104748 / NCIMB 11846 / Nb-255)).